Reading from the N-terminus, the 565-residue chain is Thiol:disulfide interchange protein DsbD (565 aa).

An N-terminal signal peptide occupies residues 1 to 19; sequence MAQRIFTLILLLCSTSVFA. 2 disulfide bridges follow: Cys122-Cys128 and Cys182-Cys304. Transmembrane regions (helical) follow at residues 163–183, 208–228, 243–263, 296–316, 323–343, 365–385, and 386–406; these read LPFS…TPCV, LLTF…GLVV, YVLI…FGLF, IAGL…LLYI, WLGG…LMLI, FGFV…GDIW, and GLRL…ITSL. The Thioredoxin domain occupies 434-565; the sequence is WAFGATHTAQ…FSAHLRDRQP (132 aa). An intrachain disulfide couples Cys480 to Cys483.

It belongs to the thioredoxin family. DsbD subfamily.

The protein resides in the cell inner membrane. It catalyses the reaction [protein]-dithiol + NAD(+) = [protein]-disulfide + NADH + H(+). It carries out the reaction [protein]-dithiol + NADP(+) = [protein]-disulfide + NADPH + H(+). Its function is as follows. Required to facilitate the formation of correct disulfide bonds in some periplasmic proteins and for the assembly of the periplasmic c-type cytochromes. Acts by transferring electrons from cytoplasmic thioredoxin to the periplasm. This transfer involves a cascade of disulfide bond formation and reduction steps. The sequence is that of Thiol:disulfide interchange protein DsbD from Shigella dysenteriae serotype 1 (strain Sd197).